Here is a 386-residue protein sequence, read N- to C-terminus: MVARSPNAKPDRQKAAALAAAAALNPALLRETLKKVDRCMARLQELQYTVAGGAKVVSGVSLSPRSTRGYLRTSLRCKQETVRMRGGASAQKRSPSGKFGGGVGGEGAQWRRMSLPAMLLGETVLEIVQASQFARDIVTAAGATNREPPRTPKPAPRTRKPAAGEPTPLRARRAREKQSHRGGAATRGADAATPPSRSRVRSRIQFKPVSPVAVGRPSVSANRVSPKNRPWAKKAVMFPNPTFHASTSAATDPCATPSPSKKQKRLYKTRSPVAARQTPHKFLVKSPPSALGSKLRMHGKALPARPAAVSPPPPVKAQASPAKTRRCSFSPSRLATRLMSPIKARLSLGRSRDSGVGVGGGPMSGLKQRPGVSLTVRTVSSKISSR.

5 disordered regions span residues 83 to 105, 140 to 202, 244 to 266, 303 to 330, and 345 to 386; these read RMRGGASAQKRSPSGKFGGGVGG, AAGA…RVRS, HASTSAATDPCATPSPSKKQKRL, PARPAAVSPPPPVKAQASPAKTRRCSFS, and RLSL…ISSR. The span at 170 to 180 shows a compositional bias: basic residues; it reads RARRAREKQSH. Residues 181–193 are compositionally biased toward low complexity; the sequence is RGGAATRGADAAT. Residues 375–386 are compositionally biased toward polar residues; it reads TVRTVSSKISSR.

As to expression, expressed in vegetative shoot tips consisting of leaf primordia and the bases of immature leaves, the shoot apical meristem, and unexpanded stem tissue. Strongly expressed in tissues enriched in dividing cells: ear primordia and embryos.

The protein localises to the cytoplasm. The protein resides in the cytoskeleton. It is found in the spindle. It localises to the phragmoplast. Is required for spatial control cell division during leaf development. Through an association with microtubules, acts both for the positioning of cytoskeletal arrays that establish planes of cell division during prophase and for spatial guidance of expanding phragmoplasts toward preestablished cortical division sites (CDS) during cytokinesis. The chain is Microtubule-binding protein TANGLED1 (TAN1) from Zea mays (Maize).